Reading from the N-terminus, the 236-residue chain is 2,3,4,5-tetrahydropyridine-2,6-dicarboxylate N-acetyltransferase (236 aa).

The protein belongs to the transferase hexapeptide repeat family. DapH subfamily.

The enzyme catalyses (S)-2,3,4,5-tetrahydrodipicolinate + acetyl-CoA + H2O = L-2-acetamido-6-oxoheptanedioate + CoA. It functions in the pathway amino-acid biosynthesis; L-lysine biosynthesis via DAP pathway; LL-2,6-diaminopimelate from (S)-tetrahydrodipicolinate (acetylase route): step 1/3. Its function is as follows. Catalyzes the transfer of an acetyl group from acetyl-CoA to tetrahydrodipicolinate. The polypeptide is 2,3,4,5-tetrahydropyridine-2,6-dicarboxylate N-acetyltransferase (Bacillus velezensis (strain DSM 23117 / BGSC 10A6 / LMG 26770 / FZB42) (Bacillus amyloliquefaciens subsp. plantarum)).